The chain runs to 98 residues: Integration host factor subunit beta (98 aa).

Belongs to the bacterial histone-like protein family. In terms of assembly, heterodimer of an alpha and a beta chain.

Its function is as follows. This protein is one of the two subunits of integration host factor, a specific DNA-binding protein that functions in genetic recombination as well as in transcriptional and translational control. The polypeptide is Integration host factor subunit beta (Marinobacter nauticus (strain ATCC 700491 / DSM 11845 / VT8) (Marinobacter aquaeolei)).